The chain runs to 295 residues: Acetylglutamate kinase (295 aa).

Substrate contacts are provided by residues 66 to 67 (GG), R88, and N193.

The protein belongs to the acetylglutamate kinase family. ArgB subfamily.

The protein localises to the cytoplasm. The enzyme catalyses N-acetyl-L-glutamate + ATP = N-acetyl-L-glutamyl 5-phosphate + ADP. Its pathway is amino-acid biosynthesis; L-arginine biosynthesis; N(2)-acetyl-L-ornithine from L-glutamate: step 2/4. Its function is as follows. Catalyzes the ATP-dependent phosphorylation of N-acetyl-L-glutamate. This Rhizobium etli (strain ATCC 51251 / DSM 11541 / JCM 21823 / NBRC 15573 / CFN 42) protein is Acetylglutamate kinase.